The chain runs to 325 residues: MNALTAVQNNAVDSGQDYSGFTLIPSAQSPRLLELTFTEQTTKQFLEQVAEWPVQALEYKSFLRFRVGKILDDLCANQLQPLLLKTLLNRAEGALLINAVGIDDVAQADEMVKLATAVAHLIGRSNFDAMSGQYYARFVVKNVDNSDSYLRQPHRVMELHNDGTYVEEITDYVLMMKIDEQNMQGGNSLLLHLDDWEHLDHFFRHPLARRPMRFAAPPSKNVSKDVFHPVFDVDQQGRPVMRYIDQFVQPKDFEEGVWLSELSDAIETSKGILSVPVPVGKFLLINNLFWLHGRDRFTPHPDLRRELMRQRGYFAYATHHYQTHQ.

Residues His160, Asp162, and His292 each contribute to the Fe cation site.

This sequence belongs to the glutarate hydroxylase family. Homotetramer. The cofactor is Fe(2+).

It carries out the reaction glutarate + 2-oxoglutarate + O2 = (S)-2-hydroxyglutarate + succinate + CO2. It participates in amino-acid degradation. In terms of biological role, acts as an alpha-ketoglutarate-dependent dioxygenase catalyzing hydroxylation of glutarate (GA) to L-2-hydroxyglutarate (L2HG). Functions in a L-lysine degradation pathway that proceeds via cadaverine, glutarate and L-2-hydroxyglutarate. This Escherichia coli O6:H1 (strain CFT073 / ATCC 700928 / UPEC) protein is Glutarate 2-hydroxylase.